Reading from the N-terminus, the 347-residue chain is 4-hydroxy-2-oxovalerate aldolase 1 (347 aa).

Positions 8–261 (VTLYDMSLLX…ETGIDLYKIM (254 aa)) constitute a Pyruvate carboxyltransferase domain. His-20 (proton acceptor) is an active-site residue. Substrate is bound by residues Ser-171 and His-200. Residues His-200 and His-202 each coordinate Mn(2+). Tyr-291 serves as a coordination point for substrate.

This sequence belongs to the 4-hydroxy-2-oxovalerate aldolase family.

The catalysed reaction is (S)-4-hydroxy-2-oxopentanoate = acetaldehyde + pyruvate. This Metapseudomonas furukawaii (Pseudomonas furukawaii) protein is 4-hydroxy-2-oxovalerate aldolase 1 (salH).